Reading from the N-terminus, the 531-residue chain is ATP synthase subunit beta (531 aa).

The tract at residues 1–48 is disordered; it reads MVKAVTSSKETAKVEKKKSAPRSGVKKAVSKSQAGVKDSSSPVHKSSK. The segment covering 19-29 has biased composition (basic residues); it reads SAPRSGVKKAV. The segment covering 30 to 44 has biased composition (polar residues); sequence SKSQAGVKDSSSPVH. Position 203–210 (203–210) interacts with ATP; it reads GGAGVGKT.

The protein belongs to the ATPase alpha/beta chains family. In terms of assembly, F-type ATPases have 2 components, CF(1) - the catalytic core - and CF(0) - the membrane proton channel. CF(1) has five subunits: alpha(3), beta(3), gamma(1), delta(1), epsilon(1). CF(0) has three main subunits: a(1), b(2) and c(9-12). The alpha and beta chains form an alternating ring which encloses part of the gamma chain. CF(1) is attached to CF(0) by a central stalk formed by the gamma and epsilon chains, while a peripheral stalk is formed by the delta and b chains.

It is found in the cell inner membrane. It catalyses the reaction ATP + H2O + 4 H(+)(in) = ADP + phosphate + 5 H(+)(out). Its function is as follows. Produces ATP from ADP in the presence of a proton gradient across the membrane. The catalytic sites are hosted primarily by the beta subunits. The protein is ATP synthase subunit beta of Bartonella henselae (strain ATCC 49882 / DSM 28221 / CCUG 30454 / Houston 1) (Rochalimaea henselae).